The following is a 267-amino-acid chain: Ribosomal RNA small subunit methyltransferase A (267 aa).

Asparagine 13, leucine 15, glycine 39, glutamate 59, aspartate 87, and asparagine 106 together coordinate S-adenosyl-L-methionine.

Belongs to the class I-like SAM-binding methyltransferase superfamily. rRNA adenine N(6)-methyltransferase family. RsmA subfamily.

It is found in the cytoplasm. It catalyses the reaction adenosine(1518)/adenosine(1519) in 16S rRNA + 4 S-adenosyl-L-methionine = N(6)-dimethyladenosine(1518)/N(6)-dimethyladenosine(1519) in 16S rRNA + 4 S-adenosyl-L-homocysteine + 4 H(+). Its function is as follows. Specifically dimethylates two adjacent adenosines (A1518 and A1519) in the loop of a conserved hairpin near the 3'-end of 16S rRNA in the 30S particle. May play a critical role in biogenesis of 30S subunits. This chain is Ribosomal RNA small subunit methyltransferase A, found in Sulfurimonas denitrificans (strain ATCC 33889 / DSM 1251) (Thiomicrospira denitrificans (strain ATCC 33889 / DSM 1251)).